The primary structure comprises 846 residues: DNA mismatch repair protein MutS (846 aa).

610-617 (GPNMGGKS) is a binding site for ATP.

It belongs to the DNA mismatch repair MutS family.

Functionally, this protein is involved in the repair of mismatches in DNA. It is possible that it carries out the mismatch recognition step. This protein has a weak ATPase activity. This is DNA mismatch repair protein MutS from Legionella pneumophila (strain Corby).